The chain runs to 85 residues: Large ribosomal subunit protein bL27 (85 aa).

Residues 1 to 22 (MAKTKAGGSTRNGRDSKGRRLG) form a disordered region.

Belongs to the bacterial ribosomal protein bL27 family.

The chain is Large ribosomal subunit protein bL27 from Mycoplasmopsis pulmonis (strain UAB CTIP) (Mycoplasma pulmonis).